The chain runs to 175 residues: Co-chaperone protein HscB homolog (175 aa).

The J domain occupies 7 to 79 (SHFALFNLPE…LKRARYLLSL (73 aa)).

Belongs to the HscB family. In terms of assembly, interacts with HscA and stimulates its ATPase activity.

Its function is as follows. Co-chaperone involved in the maturation of iron-sulfur cluster-containing proteins. Seems to help targeting proteins to be folded toward HscA. The polypeptide is Co-chaperone protein HscB homolog (Paraburkholderia phymatum (strain DSM 17167 / CIP 108236 / LMG 21445 / STM815) (Burkholderia phymatum)).